We begin with the raw amino-acid sequence, 435 residues long: U-box domain-containing protein 21 (435 aa).

One can recognise a U-box domain in the interval 30 to 104 (TIPPEFQCPI…QGWCVEKGSP (75 aa)). ARM repeat units lie at residues 202-241 (LEGI…EILS), 245-285 (TRVH…QMVL), 288-327 (PEIA…AICE), and 329-369 (EHGR…KLWK).

It carries out the reaction S-ubiquitinyl-[E2 ubiquitin-conjugating enzyme]-L-cysteine + [acceptor protein]-L-lysine = [E2 ubiquitin-conjugating enzyme]-L-cysteine + N(6)-ubiquitinyl-[acceptor protein]-L-lysine.. The protein operates within protein modification; protein ubiquitination. Functionally, functions as an E3 ubiquitin ligase. The protein is U-box domain-containing protein 21 (PUB21) of Arabidopsis thaliana (Mouse-ear cress).